A 98-amino-acid polypeptide reads, in one-letter code: NADH-ubiquinone oxidoreductase chain 4L (98 aa).

The next 3 membrane-spanning stretches (helical) occupy residues 1 to 21, 29 to 49, and 61 to 81; these read MSLT…GLLL, SLLC…MIIL, and IILL…LVMV.

This sequence belongs to the complex I subunit 4L family. As to quaternary structure, core subunit of respiratory chain NADH dehydrogenase (Complex I) which is composed of 45 different subunits.

The protein resides in the mitochondrion inner membrane. The enzyme catalyses a ubiquinone + NADH + 5 H(+)(in) = a ubiquinol + NAD(+) + 4 H(+)(out). Its function is as follows. Core subunit of the mitochondrial membrane respiratory chain NADH dehydrogenase (Complex I) which catalyzes electron transfer from NADH through the respiratory chain, using ubiquinone as an electron acceptor. Part of the enzyme membrane arm which is embedded in the lipid bilayer and involved in proton translocation. The polypeptide is NADH-ubiquinone oxidoreductase chain 4L (MT-ND4L) (Platyrrhinus brachycephalus (Short-headed broad-nosed bat)).